Reading from the N-terminus, the 373-residue chain is DNA replication and repair protein RecF (373 aa).

Gly-30–Thr-37 is a binding site for ATP.

The protein belongs to the RecF family.

The protein localises to the cytoplasm. Its function is as follows. The RecF protein is involved in DNA metabolism; it is required for DNA replication and normal SOS inducibility. RecF binds preferentially to single-stranded, linear DNA. It also seems to bind ATP. The polypeptide is DNA replication and repair protein RecF (Oenococcus oeni (strain ATCC BAA-331 / PSU-1)).